Reading from the N-terminus, the 430-residue chain is Tyrosine--tRNA ligase (430 aa).

Residue tyrosine 32 participates in L-tyrosine binding. Residues proline 37–histidine 46 carry the 'HIGH' region motif. L-tyrosine is bound by residues tyrosine 172 and glutamine 176. The 'KMSKS' region motif lies at lysine 232 to threonine 236. ATP is bound at residue lysine 235. The region spanning valine 362–alanine 429 is the S4 RNA-binding domain.

Belongs to the class-I aminoacyl-tRNA synthetase family. TyrS type 1 subfamily. Homodimer.

It is found in the cytoplasm. It carries out the reaction tRNA(Tyr) + L-tyrosine + ATP = L-tyrosyl-tRNA(Tyr) + AMP + diphosphate + H(+). Its function is as follows. Catalyzes the attachment of tyrosine to tRNA(Tyr) in a two-step reaction: tyrosine is first activated by ATP to form Tyr-AMP and then transferred to the acceptor end of tRNA(Tyr). This Bacteroides thetaiotaomicron (strain ATCC 29148 / DSM 2079 / JCM 5827 / CCUG 10774 / NCTC 10582 / VPI-5482 / E50) protein is Tyrosine--tRNA ligase.